Reading from the N-terminus, the 582-residue chain is MGGLQKKKYERGSATNYITRNKARKKLQLSLADFRRLCILKGIYPHEPKHKKKVNKGSTAPRTFYLLKDIRFLLHEPIVRKFREYKVFVRKLRKAYGKAEWTGVERLRDNKPGYKLDHIIKERYPTFIDALRDIDDALSMCFLFSTFARTGKCHVQTITLCRRLTVEWMNYVVTSRSLRKVFLSIKGIYYQAEVLGQLITWLVPYQFAHDHPTDVDYRVMATFTEMYTTLFGFINFRLYQTLNLVYPPKLDSKAESELKAEHEEDYAMDSESYLEKLSALSASLARVVATVEEEENQLDNFPTEEEDQENMQAREKEQKEQEAQKRLFEGLKFFLNREVPRESLAFILRCFGAEVSWDKSLCIGGTYEVTDETITHQIVDRPDMDKQYINRYYIQPQWVFDSVNAKMRLPVEDYFLGTMLPPHLSPFVEEKDGDYVPPEKLKLMALQRGEKPVQEEDEEEEDEDEEEDDDVDDEEFTEEKNLKKMEDTRAQGKTLSVKVTPGKVKPWETGSVGNKVRLEQEEKAEEKRLAIMMMKKKEKYLYDKIMFGKKRTTREVNKLTAKRKAHEDASKAQKKQKKAKKQ.

Residues 277–329 (LSALSASLARVVATVEEEENQLDNFPTEEEDQENMQAREKEQKEQEAQKRLFE) adopt a coiled-coil conformation. Residues 294-309 (EENQLDNFPTEEEDQE) are compositionally biased toward acidic residues. The disordered stretch occupies residues 294-317 (EENQLDNFPTEEEDQENMQAREKE). The BRCT domain maps to 323–416 (AQKRLFEGLK…MRLPVEDYFL (94 aa)). The span at 445–454 (ALQRGEKPVQ) shows a compositional bias: basic and acidic residues. Disordered regions lie at residues 445-511 (ALQR…ETGS) and 554-582 (REVN…AKKQ). Residues 455–477 (EEDEEEEDEDEEEDDDVDDEEFT) are compositionally biased toward acidic residues. Positions 478–490 (EEKNLKKMEDTRA) are enriched in basic and acidic residues. The stretch at 517-582 (RLEQEEKAEE…QKKQKKAKKQ (66 aa)) forms a coiled coil. The span at 572–582 (AQKKQKKAKKQ) shows a compositional bias: basic residues.

This sequence belongs to the pescadillo family. Component of the PeBoW complex, composed of bop1, pes1 and wdr12. The complex is held together by bop1, which interacts with pes1 via its N-terminal domain and with wdr12 via a high-affinity interaction between the seven-bladed beta-propeller domains of the 2 proteins. The PeBoW complex associates with the 66S pre-ribosome.

Its subcellular location is the nucleus. The protein localises to the nucleolus. The protein resides in the nucleoplasm. Functionally, component of the PeBoW complex, which is required for maturation of 28S and 5.8S ribosomal RNAs and formation of the 60S ribosome. The polypeptide is Pescadillo homolog (pes1) (Salmo salar (Atlantic salmon)).